We begin with the raw amino-acid sequence, 211 residues long: FMN-dependent NADH:quinone oxidoreductase 3 (211 aa).

FMN is bound at residue 102–105 (MWNF).

The protein belongs to the azoreductase type 1 family. In terms of assembly, homodimer. Requires FMN as cofactor.

It carries out the reaction 2 a quinone + NADH + H(+) = 2 a 1,4-benzosemiquinone + NAD(+). The enzyme catalyses N,N-dimethyl-1,4-phenylenediamine + anthranilate + 2 NAD(+) = 2-(4-dimethylaminophenyl)diazenylbenzoate + 2 NADH + 2 H(+). Its function is as follows. Quinone reductase that provides resistance to thiol-specific stress caused by electrophilic quinones. Functionally, also exhibits azoreductase activity. Catalyzes the reductive cleavage of the azo bond in aromatic azo compounds to the corresponding amines. The sequence is that of FMN-dependent NADH:quinone oxidoreductase 3 from Bacillus cereus (strain ATCC 10987 / NRS 248).